The primary structure comprises 182 residues: uncharacterized protein (182 aa).

Disordered regions lie at residues 1 to 49 (MAAP…DGGS) and 126 to 171 (QGGH…VHAQ). Over residues 17–39 (ELLEKAARLERGPPPRGDPEAVG) the composition is skewed to basic and acidic residues.

This is an uncharacterized protein from Homo sapiens (Human).